An 869-amino-acid chain; its full sequence is Synaptonemal complex protein ZEP1 (869 aa).

3 coiled-coil regions span residues 64–298, 330–614, and 641–713; these read TDLE…SGFT, HEEK…SERY, and RAYH…WKVM. The tract at residues 841–869 is disordered; sequence GSHPHPANIGELFSEGSLNPYAEDPYAFG.

Interacts with CRC1. Highly expressed in panicles.

The protein localises to the nucleus. Its subcellular location is the chromosome. Functionally, required for chromosome synapsis and regulates crossover frequency during meiosis. Acts as a transverse filament protein and constitutes the central element of the synaptonemal complex. The protein is Synaptonemal complex protein ZEP1 (ZEP1) of Oryza sativa subsp. japonica (Rice).